The following is a 178-amino-acid chain: Probable chorismate pyruvate-lyase (178 aa).

The substrate site is built by Met-37, Arg-78, Leu-114, and Glu-165.

It belongs to the UbiC family.

It is found in the cytoplasm. It catalyses the reaction chorismate = 4-hydroxybenzoate + pyruvate. It participates in cofactor biosynthesis; ubiquinone biosynthesis. Removes the pyruvyl group from chorismate, with concomitant aromatization of the ring, to provide 4-hydroxybenzoate (4HB) for the ubiquinone pathway. The protein is Probable chorismate pyruvate-lyase of Aeromonas salmonicida (strain A449).